Here is a 485-residue protein sequence, read N- to C-terminus: NADH-quinone oxidoreductase subunit N (485 aa).

Helical transmembrane passes span 8 to 28 (LIAL…MLSI), 35 to 55 (FLNA…LWFV), 71 to 91 (GFAM…CTFA), 105 to 125 (FYLL…ANHL), 127 to 147 (ALFL…GYAF), 159 to 179 (YTIL…LVYA), 203 to 223 (LLAG…LVPF), 235 to 255 (PAPV…GVVM), 271 to 291 (VVLG…ALSQ), 297 to 317 (LLGY…IALQ), 326 to 346 (VGVY…VVSL), 373 to 393 (AAVM…LGFI), 408 to 430 (WWLV…RVAV), and 455 to 475 (IVVL…QPLI).

This sequence belongs to the complex I subunit 2 family. NDH-1 is composed of 13 different subunits. Subunits NuoA, H, J, K, L, M, N constitute the membrane sector of the complex.

It is found in the cell inner membrane. The catalysed reaction is a quinone + NADH + 5 H(+)(in) = a quinol + NAD(+) + 4 H(+)(out). Its function is as follows. NDH-1 shuttles electrons from NADH, via FMN and iron-sulfur (Fe-S) centers, to quinones in the respiratory chain. The immediate electron acceptor for the enzyme in this species is believed to be ubiquinone. Couples the redox reaction to proton translocation (for every two electrons transferred, four hydrogen ions are translocated across the cytoplasmic membrane), and thus conserves the redox energy in a proton gradient. This chain is NADH-quinone oxidoreductase subunit N, found in Salmonella arizonae (strain ATCC BAA-731 / CDC346-86 / RSK2980).